The sequence spans 352 residues: Peptide chain release factor 1 (352 aa).

Q233 is subject to N5-methylglutamine. Positions 288–309 (NAKDRKEQVGSGDRSERIRTYN) are disordered. Over residues 289–306 (AKDRKEQVGSGDRSERIR) the composition is skewed to basic and acidic residues.

The protein belongs to the prokaryotic/mitochondrial release factor family. In terms of processing, methylated by PrmC. Methylation increases the termination efficiency of RF1.

It is found in the cytoplasm. Its function is as follows. Peptide chain release factor 1 directs the termination of translation in response to the peptide chain termination codons UAG and UAA. The polypeptide is Peptide chain release factor 1 (prfA) (Helicobacter pylori (strain J99 / ATCC 700824) (Campylobacter pylori J99)).